The following is a 467-amino-acid chain: Light-independent protochlorophyllide reductase subunit N (467 aa).

Cys23, Cys48, and Cys108 together coordinate [4Fe-4S] cluster.

It belongs to the BchN/ChlN family. As to quaternary structure, protochlorophyllide reductase is composed of three subunits; ChlL, ChlN and ChlB. Forms a heterotetramer of two ChlB and two ChlN subunits. It depends on [4Fe-4S] cluster as a cofactor.

It carries out the reaction chlorophyllide a + oxidized 2[4Fe-4S]-[ferredoxin] + 2 ADP + 2 phosphate = protochlorophyllide a + reduced 2[4Fe-4S]-[ferredoxin] + 2 ATP + 2 H2O. The protein operates within porphyrin-containing compound metabolism; chlorophyll biosynthesis (light-independent). Its function is as follows. Component of the dark-operative protochlorophyllide reductase (DPOR) that uses Mg-ATP and reduced ferredoxin to reduce ring D of protochlorophyllide (Pchlide) to form chlorophyllide a (Chlide). This reaction is light-independent. The NB-protein (ChlN-ChlB) is the catalytic component of the complex. The sequence is that of Light-independent protochlorophyllide reductase subunit N from Nostoc sp. (strain PCC 7120 / SAG 25.82 / UTEX 2576).